A 179-amino-acid polypeptide reads, in one-letter code: Disulfide bond formation protein B (179 aa).

The Cytoplasmic portion of the chain corresponds to 1-14 (MLSYFKELSLNRTA). Residues 15-31 (WLLLAFVAFALEASAIY) form a helical membrane-spanning segment. Residues 32–49 (FQYGMGLVPCVMCVYERL) are Periplasmic-facing. Cys-41 and Cys-44 are disulfide-bonded. A helical membrane pass occupies residues 50–65 (AIFGLLIAGLVGAISP). At 66–72 (RFFLTRW) the chain is on the cytoplasmic side. A helical membrane pass occupies residues 73–90 (LALLLWGFSAFKGLALAI). Residues 91–146 (KHHDYQANPSPWNQCEFKPEFPQTMPFDQWFPSIFAPGPVNCSEKQWEMFGLGMPE) are Periplasmic-facing. Cys-105 and Cys-132 are disulfide-bonded. Residues 147 to 165 (WLILAFSIFALMFVIVLLS) traverse the membrane as a helical segment. Residues 166-179 (QFKRAKPQYRSVFR) lie on the Cytoplasmic side of the membrane.

It belongs to the DsbB family.

The protein resides in the cell inner membrane. In terms of biological role, required for disulfide bond formation in some periplasmic proteins. Acts by oxidizing the DsbA protein. The sequence is that of Disulfide bond formation protein B from Actinobacillus pleuropneumoniae serotype 5b (strain L20).